The chain runs to 118 residues: MSSAGNKGSDAEQCATIFLQQQKLTLLERNYRCRFGEIDLIMREGDTVIFVEVRMRSSDRFGGAAASITAAKQLKLTRAARHYLAGCEGDFPYRFDAILISGERENEIEWIRNAFDES.

The protein belongs to the UPF0102 family.

The protein is UPF0102 protein NE0711 of Nitrosomonas europaea (strain ATCC 19718 / CIP 103999 / KCTC 2705 / NBRC 14298).